The chain runs to 248 residues: Small ribosomal subunit protein eS1 (248 aa).

The tract at residues 1-21 (MAVGKDKRISKGKKGGKKKIV) is disordered.

The protein belongs to the eukaryotic ribosomal protein eS1 family. Component of the small ribosomal subunit. Mature ribosomes consist of a small (40S) and a large (60S) subunit. The 40S subunit contains about 33 different proteins and 1 molecule of RNA (18S). The 60S subunit contains about 49 different proteins and 3 molecules of RNA (25S, 5.8S and 5S).

It localises to the cytoplasm. The polypeptide is Small ribosomal subunit protein eS1 (Syntrichia ruralis (Great hairy screw-moss)).